Consider the following 415-residue polypeptide: Neuromedin-U receptor 2 (415 aa).

Residues 1–49 (MSGMEKLQNASWIYQQKLEDPFQKHLNSTEEYLAFLCGPRRSHFFLPVS) lie on the Extracellular side of the membrane. N9 and N27 each carry an N-linked (GlcNAc...) asparagine glycan. A helical membrane pass occupies residues 50–70 (VVYVPIFVVGVIGNVLVCLVI). Residues 71 to 82 (LQHQAMKTPTNY) lie on the Cytoplasmic side of the membrane. Residues 83–103 (YLFSLAVSDLLVLLLGMPLEV) traverse the membrane as a helical segment. Residues 104–123 (YEMWRNYPFLFGPVGCYFKT) are Extracellular-facing. C119 and C204 form a disulfide bridge. Residues 124–146 (ALFETVCFASILSITTVSVERYV) traverse the membrane as a helical segment. At 147–165 (AILHPFRAKLQSTRRRALR) the chain is on the cytoplasmic side. The chain crosses the membrane as a helical span at residues 166–186 (ILGIVWGFSVLFSLPNTSIHG). The Extracellular portion of the chain corresponds to 187–214 (IKFHYFPNGSLVPGSATCTVIKPMWIYN). A glycan (N-linked (GlcNAc...) asparagine) is linked at N194. The helical transmembrane segment at 215 to 235 (FIIQVTSFLFYLLPMTVISVL) threads the bilayer. The Cytoplasmic segment spans residues 236-265 (YYLMALRLKKDKSLEADEGNANIQRPCRKS). Residues 266-286 (VNKMLFVLVLVFAICWAPFHI) form a helical membrane-spanning segment. At 287–301 (DRLFFSFVEEWSESL) the chain is on the extracellular side. The helical transmembrane segment at 302-322 (AAVFNLVHVVSGVFFYLSSAV) threads the bilayer. Topologically, residues 323-415 (NPIIYNLLSR…NYQSFHFNKT (93 aa)) are cytoplasmic.

This sequence belongs to the G-protein coupled receptor 1 family. Predominantly expressed in the CNS, particularly in the medulla oblongata, pontine reticular formation, spinal cord, and thalamus. High level in testis whereas lower levels are present in a variety of peripheral tissues including the gastrointestinal tract, genitourinary tract, liver, pancreas, adrenal gland, thyroid gland, lung, trachea, spleen and thymus.

The protein resides in the cell membrane. Functionally, receptor for the neuromedin-U and neuromedin-S neuropeptides. This Homo sapiens (Human) protein is Neuromedin-U receptor 2 (NMUR2).